We begin with the raw amino-acid sequence, 91 residues long: Large ribosomal subunit protein uL22 (91 aa).

It belongs to the universal ribosomal protein uL22 family. In terms of assembly, part of the 50S ribosomal subunit.

Functionally, this protein binds specifically to 23S rRNA; its binding is stimulated by other ribosomal proteins, e.g. L4, L17, and L20. It is important during the early stages of 50S assembly. It makes multiple contacts with different domains of the 23S rRNA in the assembled 50S subunit and ribosome. Its function is as follows. The globular domain of the protein is located near the polypeptide exit tunnel on the outside of the subunit, while an extended beta-hairpin is found that lines the wall of the exit tunnel in the center of the 70S ribosome. In Clover yellow edge phytoplasma, this protein is Large ribosomal subunit protein uL22 (rplV).